The following is a 146-amino-acid chain: Spermidine export protein MdtJ (146 aa).

The next 4 helical transmembrane spans lie at 1–21 (MIYW…TLSM), 31–51 (TGMI…AIAV), 54–74 (VALG…ITTF), and 76–96 (VLWF…MLIA).

Belongs to the drug/metabolite transporter (DMT) superfamily. Small multidrug resistance (SMR) (TC 2.A.7.1) family. MdtJ subfamily. Forms a complex with MdtI.

It is found in the cell inner membrane. Catalyzes the excretion of spermidine. The polypeptide is Spermidine export protein MdtJ (Proteus mirabilis (strain HI4320)).